Here is a 452-residue protein sequence, read N- to C-terminus: Poly(A) polymerase I (452 aa).

Catalysis depends on residues aspartate 68, aspartate 70, and aspartate 150. Residues 427 to 452 are disordered; it reads EQQRLHPKPKKKYYRPRRRKTTCSAE. Over residues 431–452 the composition is skewed to basic residues; the sequence is LHPKPKKKYYRPRRRKTTCSAE.

Belongs to the tRNA nucleotidyltransferase/poly(A) polymerase family.

The catalysed reaction is RNA(n) + ATP = RNA(n)-3'-adenine ribonucleotide + diphosphate. In terms of biological role, adds poly(A) tail to the 3' end of many RNAs, which usually targets these RNAs for decay. Plays a significant role in the global control of gene expression, through influencing the rate of transcript degradation, and in the general RNA quality control. This chain is Poly(A) polymerase I, found in Haemophilus influenzae (strain ATCC 51907 / DSM 11121 / KW20 / Rd).